Here is a 320-residue protein sequence, read N- to C-terminus: Protoheme IX farnesyltransferase (320 aa).

A run of 9 helical transmembrane segments spans residues 38–58 (VIEL…RGFP), 60–80 (IGLI…AGVF), 109–129 (EALV…WFGA), 132–152 (LSAW…TMIL), 159–179 (NIVW…AAVT), 184–204 (WPAI…YWPL), 222–242 (AIAG…AMVA), 254–276 (GWVY…HALY), and 299–319 (YLTL…AIVG).

Belongs to the UbiA prenyltransferase family. Protoheme IX farnesyltransferase subfamily.

The protein resides in the cell membrane. It carries out the reaction heme b + (2E,6E)-farnesyl diphosphate + H2O = Fe(II)-heme o + diphosphate. The protein operates within porphyrin-containing compound metabolism; heme O biosynthesis; heme O from protoheme: step 1/1. Converts heme B (protoheme IX) to heme O by substitution of the vinyl group on carbon 2 of heme B porphyrin ring with a hydroxyethyl farnesyl side group. The protein is Protoheme IX farnesyltransferase of Paenarthrobacter aurescens (strain TC1).